The primary structure comprises 113 residues: Fruiting body-specific class I hydrophobin fbh1 (113 aa).

The signal sequence occupies residues 1 to 23 (MFSIRIATVVLAASAALRPPARI). 4 cysteine pairs are disulfide-bonded: Cys-33–Cys-92, Cys-40–Cys-86, Cys-41–Cys-73, and Cys-93–Cys-106.

It belongs to the fungal hydrophobin family. Self-assembles to form functional amyloid fibrils called rodlets. Self-assembly into fibrillar rodlets occurs spontaneously at hydrophobic:hydrophilic interfaces and the rodlets further associate laterally to form amphipathic monolayers.

Its subcellular location is the secreted. It is found in the cell wall. Its function is as follows. Aerial growth, conidiation, and dispersal of filamentous fungi in the environment rely upon a capability of their secreting small amphipathic proteins called hydrophobins (HPBs) with low sequence identity. Class I can self-assemble into an outermost layer of rodlet bundles on aerial cell surfaces, conferring cellular hydrophobicity that supports fungal growth, development and dispersal; whereas Class II form highly ordered films at water-air interfaces through intermolecular interactions but contribute nothing to the rodlet structure. Fbh1 is a fruiting body-specific class I hydrophobin that is involved in the growth rate and primordia formation. The sequence is that of Fruiting body-specific class I hydrophobin fbh1 from Pleurotus ostreatus (Oyster mushroom).